Here is a 305-residue protein sequence, read N- to C-terminus: MTAVLPLPHPLADPAPRDPRQRLQREQLRLGKRLQRQVGQAIADFGMISPGDKIMVCLSGGKDSYTMLDMLLQLQRKAPVPFTLVAVNLDQKQPDFPAHVLPAYLDALGVPFDIVEQDTYSVVSRVVPAGKTMCSLCSRLRRGALYAYAQTHGVTKIALGHHRDDIVATFFMNLFHHARLAAMAPKLRSDDGAHVVIRPLAYVREAHIAAYAQARQFPIIPCNLCGSQENLQRQQVGKMLQQWDHEQPGRVEQIARALGDVRPEQLADRTLFDFLALGRSGDAPPDLAPDPGAWLTASDATHDSD.

The tract at residues methionine 1–arginine 20 is disordered. Positions serine 59–serine 64 match the PP-loop motif motif. Residues cysteine 134, cysteine 137, and cysteine 225 each contribute to the [4Fe-4S] cluster site. The span at aspartate 282–alanine 293 shows a compositional bias: low complexity. A disordered region spans residues aspartate 282 to aspartate 305.

It belongs to the TtcA family. Homodimer. It depends on Mg(2+) as a cofactor. Requires [4Fe-4S] cluster as cofactor.

The protein localises to the cytoplasm. It carries out the reaction cytidine(32) in tRNA + S-sulfanyl-L-cysteinyl-[cysteine desulfurase] + AH2 + ATP = 2-thiocytidine(32) in tRNA + L-cysteinyl-[cysteine desulfurase] + A + AMP + diphosphate + H(+). Its pathway is tRNA modification. Its function is as follows. Catalyzes the ATP-dependent 2-thiolation of cytidine in position 32 of tRNA, to form 2-thiocytidine (s(2)C32). The sulfur atoms are provided by the cysteine/cysteine desulfurase (IscS) system. This is tRNA-cytidine(32) 2-sulfurtransferase from Xanthomonas oryzae pv. oryzae (strain PXO99A).